A 102-amino-acid chain; its full sequence is Urease subunit beta (102 aa).

This sequence belongs to the urease beta subunit family. In terms of assembly, heterotrimer of UreA (gamma), UreB (beta) and UreC (alpha) subunits. Three heterotrimers associate to form the active enzyme.

Its subcellular location is the cytoplasm. It catalyses the reaction urea + 2 H2O + H(+) = hydrogencarbonate + 2 NH4(+). Its pathway is nitrogen metabolism; urea degradation; CO(2) and NH(3) from urea (urease route): step 1/1. This is Urease subunit beta from Pseudomonas syringae pv. tomato (strain ATCC BAA-871 / DC3000).